Here is an 83-residue protein sequence, read N- to C-terminus: Alpha-neurotoxin NTX-1 (83 aa).

The N-terminal stretch at 1-21 is a signal peptide; sequence MKTLLLTLLVVTIVCLDLGYT. Cystine bridges form between Cys24-Cys45, Cys38-Cys62, Cys64-Cys75, and Cys76-Cys81.

It belongs to the three-finger toxin family. Short-chain subfamily. Type I alpha-neurotoxin sub-subfamily. Expressed by the venom gland.

Its subcellular location is the secreted. Functionally, binds to muscle nicotinic acetylcholine receptor (nAChR) and inhibit acetylcholine from binding to the receptor, thereby impairing neuromuscular transmission. The protein is Alpha-neurotoxin NTX-1 of Naja sputatrix (Malayan spitting cobra).